The following is a 100-amino-acid chain: Large ribosomal subunit protein uL23 (100 aa).

It belongs to the universal ribosomal protein uL23 family. As to quaternary structure, part of the 50S ribosomal subunit. Contacts protein L29, and trigger factor when it is bound to the ribosome.

One of the early assembly proteins it binds 23S rRNA. One of the proteins that surrounds the polypeptide exit tunnel on the outside of the ribosome. Forms the main docking site for trigger factor binding to the ribosome. The polypeptide is Large ribosomal subunit protein uL23 (Synechococcus sp. (strain RCC307)).